The following is a 420-amino-acid chain: Pyrin and HIN domain-containing protein 1 (420 aa).

A Pyrin domain is found at 1–87 (MVNEYKRIVL…ANKLKNEKAK (87 aa)). Disordered stretches follow at residues 82–201 (KNEK…SSSA) and 216–236 (RLKNVPKEPSEENGHQQGSKK). Over residues 87-102 (KAKRTRTGKRKTAAKR) the composition is skewed to basic residues. Composition is skewed to polar residues over residues 108–118 (PSTSQPMSTTN) and 126–151 (GRSTPDTQVAQLSLPTASRRNQAIQI). Positions 152–169 (SPTIASSSGQTSSRSSET) are enriched in low complexity. Residues 170 to 201 (LQSIIQSPKTPKRPSSSILDPPVSSGTASSSA) are compositionally biased toward polar residues. The 198-residue stretch at 219-416 (NVPKEPSEEN…STTHSNMQVI (198 aa)) folds into the HIN-200 domain. Residues 220–229 (VPKEPSEENG) show a composition bias toward basic and acidic residues.

Belongs to the HIN-200 family.

It localises to the nucleus. The chain is Pyrin and HIN domain-containing protein 1 from Mus musculus (Mouse).